Here is a 189-residue protein sequence, read N- to C-terminus: MENIEYLNEIQAVAGKLIHSYGVPVMITLFLRWLASIVAVFLMILDQTKWKYSNNIMASLLAPYLFSSLPIVIFQVLRNGVGKWIALLTVILRLFLPNHFHESLEIPGATILLIVVTPSDIGAIFRDDLRYTGGDVCLLTSFYLINKHTKACGGIKNSFTQKDKVTYSICLWILFVYPILSSFAALFYL.

The Extracellular portion of the chain corresponds to 1 to 24 (MENIEYLNEIQAVAGKLIHSYGVP). Residues 25 to 45 (VMITLFLRWLASIVAVFLMIL) traverse the membrane as a helical segment. Topologically, residues 46–55 (DQTKWKYSNN) are cytoplasmic. The chain crosses the membrane as a helical span at residues 56-76 (IMASLLAPYLFSSLPIVIFQV). Over 77–79 (LRN) the chain is Extracellular. The chain crosses the membrane as a helical span at residues 80-100 (GVGKWIALLTVILRLFLPNHF). Topologically, residues 101-104 (HESL) are cytoplasmic. Residues 105-125 (EIPGATILLIVVTPSDIGAIF) form a helical membrane-spanning segment. Over 126–168 (RDDLRYTGGDVCLLTSFYLINKHTKACGGIKNSFTQKDKVTYS) the chain is Extracellular. The chain crosses the membrane as a helical span at residues 169 to 189 (ICLWILFVYPILSSFAALFYL).

Belongs to the Cold-regulated 413 protein family.

Its subcellular location is the cell membrane. This chain is Cold-regulated 413 plasma membrane protein 3, found in Arabidopsis thaliana (Mouse-ear cress).